The chain runs to 291 residues: DegV domain-containing protein CPE0026 (291 aa).

The region spanning 4–286 (FVIFTDSAAD…IGTLAVFFLG (283 aa)) is the DegV domain. 2 residues coordinate hexadecanoate: Thr-63 and Ser-95.

Its function is as follows. May bind long-chain fatty acids, such as palmitate, and may play a role in lipid transport or fatty acid metabolism. In Clostridium perfringens (strain 13 / Type A), this protein is DegV domain-containing protein CPE0026.